We begin with the raw amino-acid sequence, 218 residues long: Type II restriction enzyme KpnI (218 aa).

The catalysed reaction is Endonucleolytic cleavage of DNA to give specific double-stranded fragments with terminal 5'-phosphates.. A P subtype restriction enzyme that recognizes the double-stranded sequence 5'-GGTACC-3' and cleaves after C-5. In Klebsiella pneumoniae, this protein is Type II restriction enzyme KpnI.